The following is a 450-amino-acid chain: Phosphoglucosamine mutase (450 aa).

Ser102 acts as the Phosphoserine intermediate in catalysis. Positions 102, 242, 244, and 246 each coordinate Mg(2+). Ser102 carries the phosphoserine modification.

This sequence belongs to the phosphohexose mutase family. Requires Mg(2+) as cofactor. Post-translationally, activated by phosphorylation.

It catalyses the reaction alpha-D-glucosamine 1-phosphate = D-glucosamine 6-phosphate. Its function is as follows. Catalyzes the conversion of glucosamine-6-phosphate to glucosamine-1-phosphate. The protein is Phosphoglucosamine mutase of Staphylococcus haemolyticus (strain JCSC1435).